The primary structure comprises 304 residues: Quinolinate synthase (304 aa).

Iminosuccinate is bound by residues His-23 and Ser-40. Cys-86 is a binding site for [4Fe-4S] cluster. Iminosuccinate contacts are provided by residues 112-114 (YVN) and Ser-129. A [4Fe-4S] cluster-binding site is contributed by Cys-173. Iminosuccinate contacts are provided by residues 199-201 (HPE) and Thr-216. Position 260 (Cys-260) interacts with [4Fe-4S] cluster.

The protein belongs to the quinolinate synthase family. Type 2 subfamily. It depends on [4Fe-4S] cluster as a cofactor.

The protein resides in the cytoplasm. It catalyses the reaction iminosuccinate + dihydroxyacetone phosphate = quinolinate + phosphate + 2 H2O + H(+). The protein operates within cofactor biosynthesis; NAD(+) biosynthesis; quinolinate from iminoaspartate: step 1/1. Catalyzes the condensation of iminoaspartate with dihydroxyacetone phosphate to form quinolinate. The protein is Quinolinate synthase of Methanothermobacter thermautotrophicus (strain ATCC 29096 / DSM 1053 / JCM 10044 / NBRC 100330 / Delta H) (Methanobacterium thermoautotrophicum).